Consider the following 419-residue polypeptide: Transcription termination factor Rho (419 aa).

Positions 48–123 constitute a Rho RNA-BD domain; the sequence is EISGDGVLEI…LKVDTINFDR (76 aa). RNA-binding stretches follow at residues 61–66, 78–80, and 108–110; these read GFGFLR, DIY, and ERY. ATP contacts are provided by residues 169 to 174, 181 to 186, and R212; these read GKGQRG and KAGKTI. An RNA-binding 2 region spans residues 284-288; it reads VLTGG.

The protein belongs to the Rho family. In terms of assembly, homohexamer. The homohexamer assembles into an open ring structure.

Functionally, facilitates transcription termination by a mechanism that involves Rho binding to the nascent RNA, activation of Rho's RNA-dependent ATPase activity, and release of the mRNA from the DNA template. In Pseudomonas fluorescens biotype C, this protein is Transcription termination factor Rho.